Consider the following 199-residue polypeptide: Protein-methionine-sulfoxide reductase heme-binding subunit MsrQ (199 aa).

The next 4 helical transmembrane spans lie at 10–30, 82–102, 116–136, and 153–173; these read WLKVCLHLAGFLPLLWLFWAI, LWCFVWATLHLTSYALLELGI, PYLTLGIISWLVLLALTLTST, and VVYLVAILAPIHYLWSVKILS.

The protein belongs to the MsrQ family. As to quaternary structure, heterodimer of a catalytic subunit (MsrP) and a heme-binding subunit (MsrQ). Requires FMN as cofactor. The cofactor is heme b.

It is found in the cell inner membrane. In terms of biological role, part of the MsrPQ system that repairs oxidized periplasmic proteins containing methionine sulfoxide residues (Met-O), using respiratory chain electrons. Thus protects these proteins from oxidative-stress damage caused by reactive species of oxygen and chlorine generated by the host defense mechanisms. MsrPQ is essential for the maintenance of envelope integrity under bleach stress, rescuing a wide series of structurally unrelated periplasmic proteins from methionine oxidation, including the primary periplasmic chaperone SurA and the lipoprotein Pal. MsrQ provides electrons for reduction to the reductase catalytic subunit MsrP, using the quinone pool of the respiratory chain. This chain is Protein-methionine-sulfoxide reductase heme-binding subunit MsrQ, found in Salmonella newport (strain SL254).